A 159-amino-acid polypeptide reads, in one-letter code: Ecotin (159 aa).

The first 22 residues, Met1–Ala22, serve as a signal peptide directing secretion. Cysteines 68 and 105 form a disulfide.

It belongs to the protease inhibitor I11 (ecotin) family. As to quaternary structure, homodimer.

It localises to the periplasm. General inhibitor of family S1 serine proteases. The sequence is that of Ecotin from Pseudomonas putida (strain ATCC 700007 / DSM 6899 / JCM 31910 / BCRC 17059 / LMG 24140 / F1).